We begin with the raw amino-acid sequence, 274 residues long: 3-methyl-2-oxobutanoate hydroxymethyltransferase (274 aa).

Residues D49 and D88 each coordinate Mg(2+). 3-methyl-2-oxobutanoate-binding positions include D49 to S50, D88, and K118. E120 is a Mg(2+) binding site. The active-site Proton acceptor is E187.

This sequence belongs to the PanB family. Homodecamer; pentamer of dimers. Mg(2+) is required as a cofactor.

The protein resides in the cytoplasm. It catalyses the reaction 3-methyl-2-oxobutanoate + (6R)-5,10-methylene-5,6,7,8-tetrahydrofolate + H2O = 2-dehydropantoate + (6S)-5,6,7,8-tetrahydrofolate. It functions in the pathway cofactor biosynthesis; (R)-pantothenate biosynthesis; (R)-pantoate from 3-methyl-2-oxobutanoate: step 1/2. In terms of biological role, catalyzes the reversible reaction in which hydroxymethyl group from 5,10-methylenetetrahydrofolate is transferred onto alpha-ketoisovalerate to form ketopantoate. This is 3-methyl-2-oxobutanoate hydroxymethyltransferase from Paramagnetospirillum magneticum (strain ATCC 700264 / AMB-1) (Magnetospirillum magneticum).